Here is a 1115-residue protein sequence, read N- to C-terminus: Gamma tubulin complex adapter mto1 (1115 aa).

Residues 25–180 (LTDEEVRRIL…NYISSSLDQL (156 aa)) are disordered. Basic and acidic residues-rich tracts occupy residues 28 to 41 (EEVRRILSPRKEGS) and 56 to 71 (EASHKYDFEIDRDSLK). Composition is skewed to polar residues over residues 72-102 (SDSGSPRLHQNATAPTSSTPLQSPDESVNKL), 119-130 (DTTNFDRLNDNI), and 139-151 (PVLTANQGFQSQE). At S94 the chain carries Phosphoserine. Low complexity predominate over residues 165 to 176 (SDPSSPNYISSS). A coiled-coil region spans residues 445 to 915 (NEALLLRKQE…ERNSLIKNIV (471 aa)). The interval 523–537 (LMRMEQQWREDVDQL) is required for interaction with mto2. The span at 1001 to 1011 (GSTSSIPNSPR) shows a compositional bias: polar residues. Disordered regions lie at residues 1001 to 1037 (GSTSSIPNSPRASKRVSLDSEDKKLVPASPDKSAVQR) and 1067 to 1115 (EQEG…QEHK). 2 positions are modified to phosphoserine: S1005 and S1009. Composition is skewed to basic and acidic residues over residues 1016–1025 (VSLDSEDKKL) and 1067–1084 (EQEGRKRDKLGARERLQD). A coiled-coil region spans residues 1072–1102 (KRDKLGARERLQDLIRQNRSLSRQIKTDKES). Composition is skewed to polar residues over residues 1086 to 1095 (IRQNRSLSRQ) and 1104 to 1115 (SRSPSISSQEHK).

Interacts with mto2; the interaction is direct and required for efficient binding to the gamma-tubulin complex. Interacts with gamma tubulin complex subunits alp4, alp6 and gtb1. Interacts with mcp6.

The protein localises to the cytoplasm. The protein resides in the cytoskeleton. Its subcellular location is the microtubule organizing center. It is found in the spindle pole body. In terms of biological role, spindle pole body (SPB) component that acts as the gamma-tubulin complex-binding protein of the SPB outer plaque. Promotes nucleation of all cytoplasmic microtubules by recruiting the gamma-tubulin complex to the spindle pole body (SPB), to the interphase microtubule organizing center (iMTOC), and to the equatorial MTOC (eMTOC) during anaphase. In Schizosaccharomyces pombe (strain 972 / ATCC 24843) (Fission yeast), this protein is Gamma tubulin complex adapter mto1.